The following is a 518-amino-acid chain: uncharacterized protein (518 aa).

Positions 1–21 (MWKWKVILLFLAEMFVSGVNG) are cleaved as a signal peptide. Asparagine 30, asparagine 142, asparagine 295, asparagine 342, asparagine 362, asparagine 410, and asparagine 503 each carry an N-linked (GlcNAc...) asparagine glycan. One can recognise a CUB domain in the interval 389–517 (CPPFGITNSV…RGFWVSITPQ (129 aa)).

The protein resides in the secreted. This is an uncharacterized protein from Caenorhabditis elegans.